The sequence spans 273 residues: F-actin-capping protein subunit alpha (273 aa).

Belongs to the F-actin-capping protein alpha subunit family. In terms of assembly, heterodimer of an alpha and a beta subunit.

Its subcellular location is the cytoplasm. The protein resides in the cytoskeleton. In terms of biological role, F-actin-capping proteins bind in a Ca(2+)-independent manner to the fast growing ends of actin filaments (barbed end) thereby blocking the exchange of subunits at these ends. Unlike other capping proteins (such as gelsolin and severin), these proteins do not sever actin filaments. This Gibberella zeae (strain ATCC MYA-4620 / CBS 123657 / FGSC 9075 / NRRL 31084 / PH-1) (Wheat head blight fungus) protein is F-actin-capping protein subunit alpha (CAP1).